We begin with the raw amino-acid sequence, 914 residues long: Transcription factor AZF1 (914 aa).

Disordered stretches follow at residues 1–63 (MPPP…ESIS), 93–124 (STGGPSSGGAYSNLPRLSTSSTHQPPDLSQIG), and 138–275 (QQLQ…NSNQ). Polar residues predominate over residues 13 to 34 (QAGQNESQNQSSGEAGEQNQEH). Over residues 44–56 (QSQPASSQPQHQQ) the composition is skewed to low complexity. Phosphoserine is present on S61. Residues 107–116 (PRLSTSSTHQ) are compositionally biased toward polar residues. Positions 136-158 (QQQQLQNQHRQQQQQQQQQSHQQ) are polyglutamine domain. The span at 138-158 (QQLQNQHRQQQQQQQQQSHQQ) shows a compositional bias: low complexity. Positions 164–194 (PSFSTGLTGSSSQYQFLPRNDNTSQPPSKRN) are enriched in polar residues. 2 stretches are compositionally biased toward low complexity: residues 206-222 (FEFFSMQQSQQPQFQPS) and 245-275 (SNGTNNSGNMNTNADYESFFNTGTNNSNSNQ). Phosphoserine occurs at positions 286 and 325. A disordered region spans residues 326–415 (LSVNNKANGD…STDTTSNSRK (90 aa)). Residues 359–390 (DSSNNNNNNNNNNNNENNNDNNNDNNDNSINS) show a composition bias toward low complexity. The tract at residues 362–386 (NNNNNNNNNNNNENNNDNNNDNNDN) is polyasparagine domain. Residues 391–412 (ATSTNIPNQEDHSLASTDTTSN) show a composition bias toward polar residues. 4 C2H2-type zinc fingers span residues 593 to 615 (HECPYCHRLFSQATHLEVHVRSH), 621 to 643 (FVCDYCGKRFTQGGNLRTHERLH), 649 to 671 (YSCDICDKKFSRKGNLAAHLVTH), and 677 to 702 (FVCKLENCNKTFTQLGNMKAHQNRFH). Disordered regions lie at residues 743–812 (GIKG…SPTQ) and 853–877 (RLGSSSSSNTNNNNSNFSVGAAPGV). A compositionally biased stretch (polar residues) spans 754–770 (KKSTISSPENHPASTIL). Low complexity-rich tracts occupy residues 771–782 (NPNTNANNAIAN), 796–809 (SSSNSNPGSHSMIS), and 856–868 (SSSSSNTNNNNSN).

Its subcellular location is the nucleus. The protein localises to the cytoplasm. It localises to the cytosol. In terms of biological role, transcription factor involved in the diauxic shift. In the presence of glucose, activates carbon and energy metabolism genes, and in te presence of glycerol-lactate, activates genes needed for cell wall maintenance. Binds to DNA elements with the sequence AAAAGAAA (A4GA3), a motif enriched in the promoters of AZF1-sensitive genes. Required for glucose induction of CLN3 transcription. Also required for proper FLO11 expression. May also function as a corepressor. Functionally, as an intrinsically disordered protein, AZF1 is capable of forming the prion [AZF1+] that confers resistance to the drug radicicol in a gain-of-function manner but decreases the expression of AZF1's target genes. The sequence is that of Transcription factor AZF1 from Saccharomyces cerevisiae (strain ATCC 204508 / S288c) (Baker's yeast).